Here is a 280-residue protein sequence, read N- to C-terminus: Golgi phosphoprotein 3-like (280 aa).

A disordered region spans residues 1–30; that stretch reads MTTLTRRGRRADVGQENRVDSEDYIKDKDE. Residues 10-30 show a composition bias toward basic and acidic residues; the sequence is RADVGQENRVDSEDYIKDKDE. A 1,2-diacyl-sn-glycero-3-phospho-(1D-myo-inositol 4-phosphate)-binding residues include tryptophan 62, arginine 71, arginine 152, and arginine 155. Residues 171–182 are beta-hairpin required for oligomerization; sequence EKQNFLLFDMTT.

It belongs to the GOLPH3/VPS74 family. Homooligomer.

Its subcellular location is the golgi apparatus. It localises to the golgi stack membrane. The protein resides in the trans-Golgi network membrane. Functionally, phosphatidylinositol-4-phosphate-binding protein that may play a role in the process of vesicle budding at the Golgi and anterograde transport to the plasma membrane. This Xenopus tropicalis (Western clawed frog) protein is Golgi phosphoprotein 3-like (golph3l).